We begin with the raw amino-acid sequence, 162 residues long: Ribosome maturation factor RimP (162 aa).

The protein belongs to the RimP family.

It localises to the cytoplasm. Required for maturation of 30S ribosomal subunits. The chain is Ribosome maturation factor RimP from Leptospira interrogans serogroup Icterohaemorrhagiae serovar copenhageni (strain Fiocruz L1-130).